Here is an 85-residue protein sequence, read N- to C-terminus: Small ribosomal subunit protein uS17 (85 aa).

This sequence belongs to the universal ribosomal protein uS17 family. In terms of assembly, part of the 30S ribosomal subunit.

In terms of biological role, one of the primary rRNA binding proteins, it binds specifically to the 5'-end of 16S ribosomal RNA. The chain is Small ribosomal subunit protein uS17 from Ruminiclostridium cellulolyticum (strain ATCC 35319 / DSM 5812 / JCM 6584 / H10) (Clostridium cellulolyticum).